Here is a 198-residue protein sequence, read N- to C-terminus: Probable chemoreceptor glutamine deamidase CheD (198 aa).

Belongs to the CheD family.

The enzyme catalyses L-glutaminyl-[protein] + H2O = L-glutamyl-[protein] + NH4(+). Its function is as follows. Probably deamidates glutamine residues to glutamate on methyl-accepting chemotaxis receptors (MCPs), playing an important role in chemotaxis. This is Probable chemoreceptor glutamine deamidase CheD from Xanthomonas campestris pv. campestris (strain 8004).